Reading from the N-terminus, the 116-residue chain is Transcription initiation factor IIA subunit 2 (116 aa).

It belongs to the TFIIA subunit 2 family. TFIIA is a heterodimer composed of the large TOA1 and the small TOA2 subunits.

It is found in the nucleus. Its function is as follows. TFIIA is a component of the transcription machinery of RNA polymerase II and plays an important role in transcriptional activation. TFIIA in a complex with tbp mediates transcriptional activity. The chain is Transcription initiation factor IIA subunit 2 (TOA2) from Pyricularia oryzae (strain 70-15 / ATCC MYA-4617 / FGSC 8958) (Rice blast fungus).